Consider the following 324-residue polypeptide: Acetyl-coenzyme A carboxylase carboxyl transferase subunit alpha (324 aa).

One can recognise a CoA carboxyltransferase C-terminal domain in the interval 44–297 (LEERAKQLRY…KAALLRNLAE (254 aa)).

This sequence belongs to the AccA family. Acetyl-CoA carboxylase is a heterohexamer composed of biotin carboxyl carrier protein (AccB), biotin carboxylase (AccC) and two subunits each of ACCase subunit alpha (AccA) and ACCase subunit beta (AccD).

It localises to the cytoplasm. It catalyses the reaction N(6)-carboxybiotinyl-L-lysyl-[protein] + acetyl-CoA = N(6)-biotinyl-L-lysyl-[protein] + malonyl-CoA. It participates in lipid metabolism; malonyl-CoA biosynthesis; malonyl-CoA from acetyl-CoA: step 1/1. Component of the acetyl coenzyme A carboxylase (ACC) complex. First, biotin carboxylase catalyzes the carboxylation of biotin on its carrier protein (BCCP) and then the CO(2) group is transferred by the carboxyltransferase to acetyl-CoA to form malonyl-CoA. The protein is Acetyl-coenzyme A carboxylase carboxyl transferase subunit alpha of Thermosynechococcus vestitus (strain NIES-2133 / IAM M-273 / BP-1).